The chain runs to 103 residues: UPF0145 protein RSKD131_1772 (103 aa).

It belongs to the UPF0145 family.

This is UPF0145 protein RSKD131_1772 from Cereibacter sphaeroides (strain KD131 / KCTC 12085) (Rhodobacter sphaeroides).